The primary structure comprises 742 residues: Potassium transporter 19 (742 aa).

Over 1–46 (MSVQEDGAARPEPDVLRRHDSLYGDAEKVSNNKRHGAGGSWARTLQ) the chain is Cytoplasmic. The helical transmembrane segment at 47-67 (LAFQSIGVVYGDVGTSPLYVY) threads the bilayer. Over 68–83 (SSTFPNGIKHPDDLVG) the chain is Extracellular. A helical membrane pass occupies residues 84–104 (VLSLILYTLILIPMVKYVFIV). Topologically, residues 105–170 (LYANDNGDGG…QKLESSNAAK (66 aa)) are cytoplasmic. Residues 171–191 (IALFTITILGTSMVMGDGTLT) form a helical membrane-spanning segment. The Extracellular portion of the chain corresponds to 192–206 (PAISVLSAVSGIREK). The helical transmembrane segment at 207–227 (APNLTQSQVVWISVAILFVLF) threads the bilayer. Residues 228–236 (SMQRFGTDK) lie on the Cytoplasmic side of the membrane. A helical membrane pass occupies residues 237–257 (VGYTFAPVISVWFLLIAGIGM). The Extracellular segment spans residues 258–287 (YNLTVHEITILRAFNPKYIVDYFRRNGKEA). Asparagine 259 is a glycosylation site (N-linked (GlcNAc...) asparagine). A helical membrane pass occupies residues 288 to 308 (WVSLGGVVLCITGTEAMFADL). Over 309 to 317 (GHFNIRAIQ) the chain is Cytoplasmic. Residues 318 to 338 (LSFTCVLFPSVALCYMGQAAY) traverse the membrane as a helical segment. Over 339–352 (LRKFPENVGDTFYR) the chain is Extracellular. Residues 353 to 373 (SIPAPLFWPVFVVAIMGAIIA) traverse the membrane as a helical segment. Over 374-409 (SQAMLSGAFAILSKALSLGCFPRVEVVHTSNKYEGQ) the chain is Cytoplasmic. Residues 410–430 (VYIPEVNFLIGAASVAVTLAF) form a helical membrane-spanning segment. Over 431-441 (QTTANIGNAYG) the chain is Extracellular. Residues 442–462 (ICVVTVFSITTHLMTVVMLLI) traverse the membrane as a helical segment. Topologically, residues 463 to 468 (WKVRLP) are cytoplasmic. A helical membrane pass occupies residues 469–489 (FIAAFYAAFGLAEFLYLSSIL). Residues 490 to 495 (SKFAEG) lie on the Extracellular side of the membrane. Residues 496–516 (GYLPFCFSLVLMALMATWHYV) form a helical membrane-spanning segment. Residues 517-742 (HVKRYWYELD…LLKVGITYEI (226 aa)) are Cytoplasmic-facing.

This sequence belongs to the HAK/KUP transporter (TC 2.A.72.3) family.

It localises to the membrane. High-affinity potassium transporter. In Oryza sativa subsp. japonica (Rice), this protein is Potassium transporter 19 (HAK19).